Consider the following 321-residue polypeptide: Merozoite surface protein 9 (321 aa).

Over residues 58-74 (KEDNQAVDTKSMEEPKV) the composition is skewed to basic and acidic residues. Disordered regions lie at residues 58–88 (KEDNQAVDTKSMEEPKVKAQPALRGVEPTED), 113–141 (NNTPNVVPPTQSKKKNKNETVSGMDENFD), and 263–321 (IEAE…EEKK). Over residues 113 to 122 (NNTPNVVPPT) the composition is skewed to low complexity. Residues 273-321 (KNKEEEEKEKEKEKEKEEKEKEEKEKEKEEKEKEEKEKEEKEEKEEEKK) show a composition bias toward basic and acidic residues.

This sequence belongs to the plasmodium ABRA family. Forms a complex composed of MSP1, MSP6, MSP7, MSP9 and MSP3; within the complex, MSP6 and MSP9 mediate the binding to the host erythrocyte. Interacts with MSP1 subunits p19 and p42; the interaction is direct. Interacts with host SLC4A1/Band 3 protein (via the 5ABC region). MSP1 subunits p19 or p42, and MSP9 form a co-ligand complex that interacts with host SLC4A1/Band 3 protein. Post-translationally, not glycosylated.

Its subcellular location is the cell membrane. It is found in the parasitophorous vacuole lumen. It localises to the secreted. In terms of biological role, during the asexual blood stage, involved in the sialic acid-independent (SAID) merozoite invasion of host erythrocytes by binding to host SLC4A1/Band 3 protein on the surface of the host erythrocyte. This chain is Merozoite surface protein 9, found in Plasmodium falciparum (isolate FC27 / Papua New Guinea).